We begin with the raw amino-acid sequence, 332 residues long: L-lactate dehydrogenase A chain (332 aa).

Ala2 carries the post-translational modification N-acetylalanine. Lys5 is modified (N6-acetyllysine; alternate). Position 5 is an N6-succinyllysine; alternate (Lys5). At Lys14 the chain carries N6-acetyllysine. Thr18 is subject to Phosphothreonine. Residue 29-57 participates in NAD(+) binding; it reads GAVGMACAISILMKDLADELALVDVIEDK. Lys57 bears the N6-acetyllysine; alternate mark. Lys57 participates in a covalent cross-link: Glycyl lysine isopeptide (Lys-Gly) (interchain with G-Cter in SUMO2); alternate. Lys81 is modified (N6-acetyllysine). An NAD(+)-binding site is contributed by Arg99. Residue Arg106 coordinates substrate. At Lys118 the chain carries N6-acetyllysine; alternate. Lys118 bears the N6-succinyllysine; alternate mark. The residue at position 126 (Lys126) is an N6-acetyllysine. Asn138 and Arg169 together coordinate substrate. The Proton acceptor role is filled by His193. N6-acetyllysine occurs at positions 224 and 232. Tyr239 bears the Phosphotyrosine mark. The residue at position 243 (Lys243) is an N6-acetyllysine. Thr248 is a substrate binding site. At Thr309 the chain carries Phosphothreonine. Residue Ser310 is modified to Phosphoserine. An N6-acetyllysine; alternate modification is found at Lys318. Lys318 bears the N6-succinyllysine; alternate mark. Phosphothreonine is present on Thr322.

This sequence belongs to the LDH/MDH superfamily. LDH family. Homotetramer. Interacts with PTEN upstream reading frame protein MP31. In terms of processing, ISGylated.

The protein resides in the cytoplasm. The catalysed reaction is (S)-lactate + NAD(+) = pyruvate + NADH + H(+). Its pathway is fermentation; pyruvate fermentation to lactate; (S)-lactate from pyruvate: step 1/1. Interconverts simultaneously and stereospecifically pyruvate and lactate with concomitant interconversion of NADH and NAD(+). The polypeptide is L-lactate dehydrogenase A chain (LDHA) (Pan troglodytes (Chimpanzee)).